Reading from the N-terminus, the 691-residue chain is Elongation factor G (691 aa).

Positions 8 to 282 (ERVRNIGIAA…AVVDYLPAPI (275 aa)) constitute a tr-type G domain. Residues 17–24 (AHIDAGKT), 81–85 (DTPGH), and 135–138 (NKMD) each bind GTP.

The protein belongs to the TRAFAC class translation factor GTPase superfamily. Classic translation factor GTPase family. EF-G/EF-2 subfamily.

Its subcellular location is the cytoplasm. Functionally, catalyzes the GTP-dependent ribosomal translocation step during translation elongation. During this step, the ribosome changes from the pre-translocational (PRE) to the post-translocational (POST) state as the newly formed A-site-bound peptidyl-tRNA and P-site-bound deacylated tRNA move to the P and E sites, respectively. Catalyzes the coordinated movement of the two tRNA molecules, the mRNA and conformational changes in the ribosome. In Synechococcus sp. (strain CC9902), this protein is Elongation factor G.